We begin with the raw amino-acid sequence, 115 residues long: U3-lycotoxin-Ls1a (115 aa).

The N-terminal stretch at 1–20 (MKFVLLFGVFLVTLFSYSSA) is a signal peptide. Residues 21 to 44 (EMLDDFGQADEDELLSLIEKEEAR) constitute a propeptide that is removed on maturation. Cystine bridges form between Cys-48–Cys-63, Cys-55–Cys-72, Cys-62–Cys-87, and Cys-74–Cys-85.

This sequence belongs to the neurotoxin 19 (CSTX) family. 01 subfamily. Expressed by the venom gland.

Its subcellular location is the secreted. The polypeptide is U3-lycotoxin-Ls1a (Lycosa singoriensis (Wolf spider)).